The sequence spans 248 residues: Delayed minus-nitrogen induction protein 2 (248 aa).

Helical transmembrane passes span 26-46 (IFSNAILGIAWLFLIFLCCSC), 110-130 (VHPVLLAIVVVFSTLSIVLTI), 144-164 (ISCLTTSTAACLLLALQMALA), and 186-206 (GVAAAVFGWISSGFFLLFSLI).

Belongs to the SUR7 family.

Its subcellular location is the membrane. The polypeptide is Delayed minus-nitrogen induction protein 2 (dni2) (Schizosaccharomyces pombe (strain 972 / ATCC 24843) (Fission yeast)).